A 436-amino-acid chain; its full sequence is Hydrogenobyrinate a,c-diamide synthase (436 aa).

Residues 244 to 435 form the GATase cobBQ-type domain; sequence HIAVARDDAF…MHVIDFCGEK (192 aa). Cys327 serves as the catalytic Nucleophile.

This sequence belongs to the CobB/CbiA family. It depends on Mg(2+) as a cofactor.

The enzyme catalyses hydrogenobyrinate + 2 L-glutamine + 2 ATP + 2 H2O = hydrogenobyrinate a,c-diamide + 2 L-glutamate + 2 ADP + 2 phosphate + 2 H(+). The protein operates within cofactor biosynthesis; adenosylcobalamin biosynthesis; cob(II)yrinate a,c-diamide from precorrin-2 (aerobic route): step 9/10. In terms of biological role, catalyzes the ATP-dependent amidation of the two carboxylate groups at positions a and c of hydrogenobyrinate, using either L-glutamine or ammonia as the nitrogen source. The protein is Hydrogenobyrinate a,c-diamide synthase of Brucella anthropi (strain ATCC 49188 / DSM 6882 / CCUG 24695 / JCM 21032 / LMG 3331 / NBRC 15819 / NCTC 12168 / Alc 37) (Ochrobactrum anthropi).